Here is a 536-residue protein sequence, read N- to C-terminus: CTP synthase (536 aa).

The segment at 1 to 267 (MSKFVFVTGG…CKETLNYLEL (267 aa)) is amidoligase domain. Ser-13 is a CTP binding site. Ser-13 is a UTP binding site. Residues 14-19 (SIGKGI) and Asp-71 each bind ATP. Positions 71 and 141 each coordinate Mg(2+). Residues 148-150 (DIE), 188-193 (KTKPTQ), and Lys-224 contribute to the CTP site. UTP contacts are provided by residues 188–193 (KTKPTQ) and Lys-224. Residues 292–534 (KVALVGKYIE…IKASQDKLTQ (243 aa)) form the Glutamine amidotransferase type-1 domain. Gly-354 contacts L-glutamine. Cys-381 functions as the Nucleophile; for glutamine hydrolysis in the catalytic mechanism. L-glutamine contacts are provided by residues 382-385 (LGMQ), Glu-405, and Arg-462. Catalysis depends on residues His-507 and Glu-509.

It belongs to the CTP synthase family. Homotetramer.

The catalysed reaction is UTP + L-glutamine + ATP + H2O = CTP + L-glutamate + ADP + phosphate + 2 H(+). It catalyses the reaction L-glutamine + H2O = L-glutamate + NH4(+). The enzyme catalyses UTP + NH4(+) + ATP = CTP + ADP + phosphate + 2 H(+). The protein operates within pyrimidine metabolism; CTP biosynthesis via de novo pathway; CTP from UDP: step 2/2. Allosterically activated by GTP, when glutamine is the substrate; GTP has no effect on the reaction when ammonia is the substrate. The allosteric effector GTP functions by stabilizing the protein conformation that binds the tetrahedral intermediate(s) formed during glutamine hydrolysis. Inhibited by the product CTP, via allosteric rather than competitive inhibition. Its function is as follows. Catalyzes the ATP-dependent amination of UTP to CTP with either L-glutamine or ammonia as the source of nitrogen. Regulates intracellular CTP levels through interactions with the four ribonucleotide triphosphates. The polypeptide is CTP synthase (Prochlorococcus marinus (strain MIT 9301)).